The following is a 142-amino-acid chain: Hemoglobin subunit epsilon (142 aa).

A Globin domain is found at His3–Leu142. Phosphoserine occurs at positions 14 and 51. Heme b contacts are provided by His64 and His93.

It belongs to the globin family. In terms of assembly, heterotetramer of two alpha chains and two epsilon chains in early embryonic hemoglobin Gower-2; two zeta chains and two epsilon chains in early embryonic hemoglobin Gower-1. In terms of tissue distribution, red blood cells.

In terms of biological role, the epsilon chain is a beta-type chain of early mammalian embryonic hemoglobin. The sequence is that of Hemoglobin subunit epsilon (HBE1) from Callithrix geoffroyi (Geoffroy's marmoset).